Consider the following 4241-residue polypeptide: Intermembrane lipid transfer protein vps13E (4241 aa).

A Chorein N-terminal domain is found at 5–97 (ILPGLLKKIL…GPKDIINTFS (93 aa)). Positions 120–140 (IDSNSNNNNKKNAPSSSSSND) are enriched in low complexity. 8 disordered regions span residues 120–143 (IDSNSNNNNKKNAPSSSSSNDDFF), 234–340 (LSKN…QQQQ), 942–986 (LGTG…VEKE), 1220–1256 (NNNNNNNNNNNNNNNNNNNNNRNLNNNNNNNNNNQKP), 1345–1369 (TTTTTSPRYHHQNHHNHQHKKQNRH), 1534–1571 (KPSSKDNNNNNNNNNNSDSDSDSDTDSSSSSENNYNNN), 2148–2192 (QQQQ…PNVH), and 2217–2282 (VTEK…NNIN). Polar residues predominate over residues 234–254 (LSKNTSTHQQQQPTFNPYVGS). Over residues 255 to 264 (QQQQQQQPQQ) the composition is skewed to low complexity. The segment covering 279 to 289 (FMNNKNSDEGI) has biased composition (polar residues). 3 stretches are compositionally biased toward low complexity: residues 290 to 313 (SSSSSSSSFNNNNLNIPTLNLNDN), 325 to 340 (QPTPKSEQYQQQQQQQ), and 942 to 952 (LGTGNGINNNN). The segment covering 968 to 986 (DDGKYPEQDDLDDSKVEKE) has biased composition (basic and acidic residues). Residues 1220–1253 (NNNNNNNNNNNNNNNNNNNNNRNLNNNNNNNNNN) show a composition bias toward low complexity. The segment covering 1352–1369 (RYHHQNHHNHQHKKQNRH) has biased composition (basic residues). Low complexity-rich tracts occupy residues 1538-1551 (KDNNNNNNNNNNSD), 1559-1571 (DSSSSSENNYNNN), and 2148-2177 (QQQQQQQQQNNNNNQNNQASSNNNNNNNNN). Residues 2178 to 2188 (VSGNTINNKSV) are compositionally biased toward polar residues. Over residues 2246 to 2259 (SDDDDDEGEDEDIG) the composition is skewed to acidic residues. The segment covering 2265–2282 (DHSTSSAPTSRSNYNNIN) has biased composition (polar residues). One can recognise an SHR-BD domain in the interval 2825-3134 (KIVFYNQYWI…IPYVWDLPLE (310 aa)). Disordered regions lie at residues 3973–4000 (PTTTTTTNTTTTPYQSSQNIHSTPYPTE), 4059–4094 (YQHSGSGAPPPPPIITTTTNSTIPPPSSNINQRQLQ), and 4109–4140 (KSMARQQQFQQPPPPPPLPSNNRLSLTPSGSG). A compositionally biased stretch (low complexity) spans 3974–3984 (TTTTTTNTTTT). Residues 3985–4000 (PYQSSQNIHSTPYPTE) show a composition bias toward polar residues. Polar residues predominate over residues 4128 to 4140 (SNNRLSLTPSGSG).

The protein belongs to the VPS13 family.

The protein resides in the membrane. In terms of biological role, mediates the transfer of lipids between membranes at organelle contact sites. In Dictyostelium discoideum (Social amoeba), this protein is Intermembrane lipid transfer protein vps13E (vps13E).